We begin with the raw amino-acid sequence, 23 residues long: Thylakoid lumenal 17.4 kDa protein (23 aa).

Residues 1–23 (ANQRLPPLSNDPDRCERAFVGNT) are disordered.

It is found in the plastid. The protein localises to the chloroplast thylakoid lumen. The protein is Thylakoid lumenal 17.4 kDa protein of Spinacia oleracea (Spinach).